The sequence spans 63 residues: Large ribosomal subunit protein bL28 (63 aa).

The tract at residues 1–20 (MSRRCAITGKGPMVGNNVSH) is disordered.

This sequence belongs to the bacterial ribosomal protein bL28 family.

The protein is Large ribosomal subunit protein bL28 of Campylobacter curvus (strain 525.92).